A 264-amino-acid polypeptide reads, in one-letter code: MFTFILLCLLVGALAGFLAGLFGIGGGLVIVPTLVYLLPIVDVPESLLMSTALGTSFATIVITGIGSAQRHHKLGNIVWQAVRILAPVIMLSVFICGLFIGRLDREISAKIFACLVVYLATKMVLSIKKDQVTTKSLTPLSSVIGGILIGMASSAAGIGGGGFIVPFLTARGINIKQAIGSSAFCGMLLGISGMFSFIVSGWGNPLMPEYSLGYIYLPAVLGITATSFFTSKLGASATAKLPVSTLKKGFALFLIVVAINMFLK.

9 consecutive transmembrane segments (helical) span residues 4–24 (FILL…LFGI), 28–48 (LVIV…ESLL), 49–69 (MSTA…GSAQ), 81–101 (AVRI…LFIG), 107–127 (ISAK…VLSI), 147–167 (ILIG…IVPF), 183–203 (AFCG…SGWG), 210–230 (YSLG…SFFT), and 243–263 (VSTL…NMFL).

The protein belongs to the 4-toluene sulfonate uptake permease (TSUP) (TC 2.A.102) family.

The protein localises to the cell membrane. The chain is Probable membrane transporter protein HI_0902 from Haemophilus influenzae (strain ATCC 51907 / DSM 11121 / KW20 / Rd).